The following is a 253-amino-acid chain: Ubiquinone/menaquinone biosynthesis C-methyltransferase UbiE (253 aa).

Residues T76, D97, and 125-126 each bind S-adenosyl-L-methionine; that span reads NA.

It belongs to the class I-like SAM-binding methyltransferase superfamily. MenG/UbiE family.

It carries out the reaction a 2-demethylmenaquinol + S-adenosyl-L-methionine = a menaquinol + S-adenosyl-L-homocysteine + H(+). It catalyses the reaction a 2-methoxy-6-(all-trans-polyprenyl)benzene-1,4-diol + S-adenosyl-L-methionine = a 5-methoxy-2-methyl-3-(all-trans-polyprenyl)benzene-1,4-diol + S-adenosyl-L-homocysteine + H(+). It functions in the pathway quinol/quinone metabolism; menaquinone biosynthesis; menaquinol from 1,4-dihydroxy-2-naphthoate: step 2/2. It participates in cofactor biosynthesis; ubiquinone biosynthesis. Its function is as follows. Methyltransferase required for the conversion of demethylmenaquinol (DMKH2) to menaquinol (MKH2) and the conversion of 2-polyprenyl-6-methoxy-1,4-benzoquinol (DDMQH2) to 2-polyprenyl-3-methyl-6-methoxy-1,4-benzoquinol (DMQH2). The sequence is that of Ubiquinone/menaquinone biosynthesis C-methyltransferase UbiE from Rhodopseudomonas palustris (strain ATCC BAA-98 / CGA009).